Consider the following 194-residue polypeptide: UPF0301 protein FTA_1286 (194 aa).

Belongs to the UPF0301 (AlgH) family.

The sequence is that of UPF0301 protein FTA_1286 from Francisella tularensis subsp. holarctica (strain FTNF002-00 / FTA).